Here is a 391-residue protein sequence, read N- to C-terminus: Elongation factor Tu (391 aa).

A tr-type G domain is found at 10 to 201 (KPHVNIGTIG…EVDKYIPTPE (192 aa)). Residues 19-26 (GHVDHGKT) form a G1 region. 19 to 26 (GHVDHGKT) lines the GTP pocket. Mg(2+) is bound at residue threonine 26. The interval 55–59 (GITIS) is G2. A G3 region spans residues 76–79 (DCPG). GTP is bound by residues 76–80 (DCPGH) and 131–134 (NKVD). Positions 131–134 (NKVD) are G4. Positions 169–171 (SAL) are G5.

It belongs to the TRAFAC class translation factor GTPase superfamily. Classic translation factor GTPase family. EF-Tu/EF-1A subfamily. Monomer.

Its subcellular location is the cytoplasm. The catalysed reaction is GTP + H2O = GDP + phosphate + H(+). Its function is as follows. GTP hydrolase that promotes the GTP-dependent binding of aminoacyl-tRNA to the A-site of ribosomes during protein biosynthesis. This chain is Elongation factor Tu, found in Chelativorans sp. (strain BNC1).